The primary structure comprises 193 residues: Surfactant protein C (193 aa).

Residues 1–23 (MDMSSKEVLMESPPDYSAGPRSQ) constitute a propeptide that is removed on maturation. S-palmitoyl cysteine attachment occurs at residues C28 and C29. A propeptide spanning residues 59-193 (HMSQKHTEMV…LCGELPLYYI (135 aa)) is cleaved from the precursor. Residues 94–193 (FSIGSTGIVV…LCGELPLYYI (100 aa)) form the BRICHOS domain. Residues C121 and C185 are joined by a disulfide bond. Residues 147–170 (KPSTPTSKLGQEEGHDTGSESDSS) form a disordered region.

It localises to the secreted. It is found in the extracellular space. The protein localises to the surface film. Functionally, pulmonary surfactant associated proteins promote alveolar stability by lowering the surface tension at the air-liquid interface in the peripheral air spaces. This chain is Surfactant protein C, found in Mus musculus (Mouse).